The following is a 312-amino-acid chain: Ribosomal RNA small subunit methyltransferase H (312 aa).

A disordered region spans residues 1 to 24; sequence MNIMTANQGAVSPSQTESEASPPT. S-adenosyl-L-methionine-binding positions include 55–57, Asp72, Tyr96, Asp117, and Gln124; that span reads AGH. Positions 288-312 are disordered; it reads EQVDNPRARSAKLRVGERAAAPEGS.

Belongs to the methyltransferase superfamily. RsmH family.

The protein localises to the cytoplasm. The enzyme catalyses cytidine(1402) in 16S rRNA + S-adenosyl-L-methionine = N(4)-methylcytidine(1402) in 16S rRNA + S-adenosyl-L-homocysteine + H(+). Specifically methylates the N4 position of cytidine in position 1402 (C1402) of 16S rRNA. The polypeptide is Ribosomal RNA small subunit methyltransferase H (Deinococcus radiodurans (strain ATCC 13939 / DSM 20539 / JCM 16871 / CCUG 27074 / LMG 4051 / NBRC 15346 / NCIMB 9279 / VKM B-1422 / R1)).